Reading from the N-terminus, the 415-residue chain is Lipoyl synthase, mitochondrial (415 aa).

The N-terminal 32 residues, 1–32 (MAVSTSHFRSLCASSRSLSRTGIVAPISCRGY), are a transit peptide targeting the mitochondrion. The disordered stretch occupies residues 30-50 (RGYATTEPSPSATSTTTTTTA). Residues 33–49 (ATTEPSPSATSTTTTTT) are compositionally biased toward low complexity. [4Fe-4S] cluster-binding residues include C132, C137, C143, C163, C167, C170, and S378. One can recognise a Radical SAM core domain in the interval 146-367 (GSDKSAATAT…RQRALDMGFL (222 aa)).

Belongs to the radical SAM superfamily. Lipoyl synthase family. [4Fe-4S] cluster is required as a cofactor.

It is found in the mitochondrion. It carries out the reaction [[Fe-S] cluster scaffold protein carrying a second [4Fe-4S](2+) cluster] + N(6)-octanoyl-L-lysyl-[protein] + 2 oxidized [2Fe-2S]-[ferredoxin] + 2 S-adenosyl-L-methionine + 4 H(+) = [[Fe-S] cluster scaffold protein] + N(6)-[(R)-dihydrolipoyl]-L-lysyl-[protein] + 4 Fe(3+) + 2 hydrogen sulfide + 2 5'-deoxyadenosine + 2 L-methionine + 2 reduced [2Fe-2S]-[ferredoxin]. Its pathway is protein modification; protein lipoylation via endogenous pathway; protein N(6)-(lipoyl)lysine from octanoyl-[acyl-carrier-protein]: step 2/2. Catalyzes the radical-mediated insertion of two sulfur atoms into the C-6 and C-8 positions of the octanoyl moiety bound to the lipoyl domains of lipoate-dependent enzymes, thereby converting the octanoylated domains into lipoylated derivatives. This chain is Lipoyl synthase, mitochondrial, found in Neosartorya fischeri (strain ATCC 1020 / DSM 3700 / CBS 544.65 / FGSC A1164 / JCM 1740 / NRRL 181 / WB 181) (Aspergillus fischerianus).